The primary structure comprises 252 residues: Trans-aconitate 2-methyltransferase (252 aa).

It belongs to the methyltransferase superfamily. Tam family.

Its subcellular location is the cytoplasm. The catalysed reaction is trans-aconitate + S-adenosyl-L-methionine = (E)-3-(methoxycarbonyl)pent-2-enedioate + S-adenosyl-L-homocysteine. Catalyzes the S-adenosylmethionine monomethyl esterification of trans-aconitate. In Escherichia coli O7:K1 (strain IAI39 / ExPEC), this protein is Trans-aconitate 2-methyltransferase.